Here is a 219-residue protein sequence, read N- to C-terminus: Cytidylate kinase (219 aa).

10–18 (GPAAAGKST) is an ATP binding site.

The protein belongs to the cytidylate kinase family. Type 1 subfamily.

It localises to the cytoplasm. The catalysed reaction is CMP + ATP = CDP + ADP. It catalyses the reaction dCMP + ATP = dCDP + ADP. The sequence is that of Cytidylate kinase from Staphylococcus aureus (strain MRSA252).